We begin with the raw amino-acid sequence, 249 residues long: E3 ubiquitin-protein ligase RMA1 (249 aa).

Residues Cys48 to Lys97 form an RING-type zinc finger. A helical; Anchor for type IV membrane protein membrane pass occupies residues Leu231–Leu248.

As to expression, ubiquitous. Highly expressed in roots.

It localises to the endoplasmic reticulum membrane. It catalyses the reaction S-ubiquitinyl-[E2 ubiquitin-conjugating enzyme]-L-cysteine + [acceptor protein]-L-lysine = [E2 ubiquitin-conjugating enzyme]-L-cysteine + N(6)-ubiquitinyl-[acceptor protein]-L-lysine.. Its pathway is protein modification; protein ubiquitination. In terms of biological role, E3 ubiquitin-protein ligase that promotes the ubiquitination and proteasomal degradation of aquaporin PIP2-1. Forms a ubiquitin ligase complex in cooperation with the E2 enzymes UCB8/UCB10. The protein is E3 ubiquitin-protein ligase RMA1 (RMA1) of Arabidopsis thaliana (Mouse-ear cress).